A 677-amino-acid chain; its full sequence is Methionine--tRNA ligase (677 aa).

The 'HIGH' region signature appears at 15–25; that stretch reads PYANGSIHLGH. 4 residues coordinate Zn(2+): Cys-146, Cys-149, Cys-159, and Cys-162. The short motif at 333–337 is the 'KMSKS' region element; sequence KMSKS. Position 336 (Lys-336) interacts with ATP. The region spanning 575 to 677 is the tRNA-binding domain; it reads DFAKVDLRVA…AGAKPGHQVK (103 aa).

The protein belongs to the class-I aminoacyl-tRNA synthetase family. MetG type 1 subfamily. Homodimer. The cofactor is Zn(2+).

The protein localises to the cytoplasm. It catalyses the reaction tRNA(Met) + L-methionine + ATP = L-methionyl-tRNA(Met) + AMP + diphosphate. Functionally, is required not only for elongation of protein synthesis but also for the initiation of all mRNA translation through initiator tRNA(fMet) aminoacylation. The protein is Methionine--tRNA ligase of Shigella boydii serotype 18 (strain CDC 3083-94 / BS512).